The following is a 363-amino-acid chain: Zinc phosphodiesterase ELAC protein 1 (363 aa).

7 residues coordinate Zn(2+): His-62, His-64, Asp-66, His-67, His-182, Asp-253, and His-313. The active-site Proton acceptor is the Asp-66.

This sequence belongs to the RNase Z family. As to quaternary structure, homodimer. The cofactor is Zn(2+). As to expression, widely expressed. Expressed in heart, brain, placenta, lung, liver, skeletal muscle, kidney and pancreas.

It is found in the cytoplasm. Its subcellular location is the cytosol. The protein resides in the nucleus. It catalyses the reaction Endonucleolytic cleavage of RNA, removing extra 3' nucleotides from tRNA precursor, generating 3' termini of tRNAs. A 3'-hydroxy group is left at the tRNA terminus and a 5'-phosphoryl group is left at the trailer molecule.. Its function is as follows. Zinc phosphodiesterase, which displays some tRNA 3'-processing endonuclease activity. Specifically involved in tRNA repair: acts downstream of the ribosome-associated quality control (RQC) pathway by removing a 2',3'-cyclic phosphate from tRNAs following cleavage by ANKZF1. tRNAs are then processed by TRNT1. In Homo sapiens (Human), this protein is Zinc phosphodiesterase ELAC protein 1.